A 270-amino-acid polypeptide reads, in one-letter code: Cell surface glycoprotein CD200 receptor 5 (270 aa).

Residues 1-25 (MHALGRTPALTLLIFINIFVSGSRC) form the signal peptide. Topologically, residues 26–241 (TDKNQTIQND…STTTTTSLLT (216 aa)) are extracellular. The 107-residue stretch at 39-145 (PLTQVNTTVS…GNFGRVYDLQ (107 aa)) folds into the Ig-like V-type domain. Asn-44 is a glycosylation site (N-linked (GlcNAc...) asparagine). Intrachain disulfides connect Cys-59–Cys-129 and Cys-164–Cys-213. Residues 134–229 (PEGNFGRVYD…GNKSLFIELN (96 aa)) form the Ig-like C2-type domain. Residues Asn-192 and Asn-221 are each glycosylated (N-linked (GlcNAc...) asparagine). A helical membrane pass occupies residues 242 to 262 (ILYVKMVLLGIILLHVGFAFF). Over 263–270 (QKRNVIRT) the chain is Cytoplasmic.

This sequence belongs to the CD200R family.

The protein localises to the membrane. Functionally, may not be a receptor for the CD200/OX2 cell surface glycoprotein. The sequence is that of Cell surface glycoprotein CD200 receptor 5 (Cd200r5) from Mus musculus (Mouse).